Reading from the N-terminus, the 437-residue chain is Type II methylase M.HgiEI (437 aa).

The SAM-dependent MTase C5-type domain occupies 4 to 431; the sequence is FRFIDLFAGI…KRLQCVKLFE (428 aa). Cys-75 is a catalytic residue.

The protein belongs to the class I-like SAM-binding methyltransferase superfamily. C5-methyltransferase family.

The catalysed reaction is a 2'-deoxycytidine in DNA + S-adenosyl-L-methionine = a 5-methyl-2'-deoxycytidine in DNA + S-adenosyl-L-homocysteine + H(+). A methylase that recognizes the double-stranded sequence 5'-GGWCC-3', methylates C-? on both strands, and protects the DNA from cleavage by the HgiEI endonuclease. This system is more active than isoschizomeric RM.HgiBI. The chain is Type II methylase M.HgiEI from Herpetosiphon aurantiacus (Herpetosiphon giganteus).